Reading from the N-terminus, the 957-residue chain is Dystrophin-related protein 2 (957 aa).

Spectrin repeat units follow at residues 102–179 (DLSG…EELE) and 231–337 (EHLL…QLQD). Residues 358–383 (WERAISPNKVPYYINHQAQTTCWDHP) enclose the WW domain. The ZZ-type; degenerate zinc-finger motif lies at 605-661 (KHQTKCSICRQCPIKGFRYRSLKQFNVDICQTCFLTGRASKGNKLHYPIMEYYTPTT). Residues cysteine 610, cysteine 613, cysteine 634, and cysteine 637 each contribute to the Zn(2+) site. A Phosphoserine modification is found at serine 748. Residues 876–894 (QPPSESDGNGSAGSSLASS) are compositionally biased toward low complexity. The interval 876 to 923 (QPPSESDGNGSAGSSLASSPRQSEGSHPREKGQTTPDTEVADDVGSKS) is disordered. Threonine 910 is subject to Phosphothreonine.

Interacts with PRX; this enhances phosphorylation. Identified in a dystroglycan complex that contains at least PRX, DRP2, UTRN, DMD and DAG1. As to expression, detected in quadriceps nerve Schwann cells. Detected in sciatic nerve. Detected in trigeminal nerve Schwann cells (at protein level). Detected in brain and spinal cord.

Its subcellular location is the postsynaptic density. It is found in the cell projection. The protein localises to the dendrite. The protein resides in the perikaryon. It localises to the cell membrane. Its function is as follows. Required for normal myelination and for normal organization of the cytoplasm and the formation of Cajal bands in myelinating Schwann cells. Required for normal PRX location at appositions between the abaxonal surface of the myelin sheath and the Schwann cell plasma membrane. Possibly involved in membrane-cytoskeleton interactions of the central nervous system. The protein is Dystrophin-related protein 2 (Drp2) of Mus musculus (Mouse).